Reading from the N-terminus, the 487-residue chain is Glycogen synthase (487 aa).

Lysine 20 lines the ADP-alpha-D-glucose pocket.

It belongs to the glycosyltransferase 1 family. Bacterial/plant glycogen synthase subfamily.

The catalysed reaction is [(1-&gt;4)-alpha-D-glucosyl](n) + ADP-alpha-D-glucose = [(1-&gt;4)-alpha-D-glucosyl](n+1) + ADP + H(+). Its pathway is glycan biosynthesis; glycogen biosynthesis. Its function is as follows. Synthesizes alpha-1,4-glucan chains using ADP-glucose. This is Glycogen synthase from Aliivibrio fischeri (strain MJ11) (Vibrio fischeri).